The primary structure comprises 453 residues: Zinc finger and BTB domain-containing protein 44 (453 aa).

Residue lysine 4 forms a Glycyl lysine isopeptide (Lys-Gly) (interchain with G-Cter in SUMO2) linkage. One can recognise a BTB domain in the interval 31-98 (CDITIRVQDR…AYTATLSINT (68 aa)). Phosphoserine occurs at positions 135, 159, 161, 165, 191, 194, and 199. Threonine 200 carries the phosphothreonine modification. Residues 241–265 (QPEKAKQAENTRTLELPGPSEAGRR) form a disordered region. Residue lysine 290 forms a Glycyl lysine isopeptide (Lys-Gly) (interchain with G-Cter in SUMO2) linkage. Disordered stretches follow at residues 295 to 324 (SDEE…PGSE) and 336 to 368 (SSSI…EDDR). The span at 304–318 (SQPVSASQSSLSDQQ) shows a compositional bias: low complexity. Positions 352–361 (TLQSTSSTNA) are enriched in polar residues. 2 consecutive C2H2-type zinc fingers follow at residues 399–421 (FQCP…MLIH) and 427–449 (FQCD…RLKH).

The protein localises to the nucleus. This Rattus norvegicus (Rat) protein is Zinc finger and BTB domain-containing protein 44 (Zbtb44).